The following is a 688-amino-acid chain: PTS system glucoside-specific EIICBA component (688 aa).

The PTS EIIC type-1 domain maps to Lys-3–Asp-427. The next 10 helical transmembrane spans lie at Ile-12 to Phe-32, Leu-81 to Met-101, Leu-137 to Leu-157, Phe-182 to Trp-202, Leu-223 to Ile-243, Ala-284 to Ile-304, Val-315 to Pro-335, Phe-340 to Leu-360, Leu-364 to Gly-384, and Leu-395 to Ile-415. A PTS EIIB type-1 domain is found at Ala-438–Lys-519. Catalysis depends on Cys-460, which acts as the Phosphocysteine intermediate; for EIIB activity. Positions Asp-560–Asn-664 constitute a PTS EIIA type-1 domain. Residue His-612 is the Tele-phosphohistidine intermediate; for EIIA activity of the active site.

It is found in the cell membrane. Functionally, the phosphoenolpyruvate-dependent sugar phosphotransferase system (sugar PTS), a major carbohydrate active -transport system, catalyzes the phosphorylation of incoming sugar substrates concomitantly with their translocation across the cell membrane. This system is involved in alpha- and beta-glucoside transport. The chain is PTS system glucoside-specific EIICBA component (glcB) from Staphylococcus aureus (strain bovine RF122 / ET3-1).